The following is a 557-amino-acid chain: MAAQGFLLIATFLLVLMVLARPLGSGLARLINDIPLPGTAGVERILFRLPGVSDHEMNWKQYLCAILGLNMLGLAVLFFMLLGQHYLPLNPQQLPGLSWDLALNTAVNFVTNTNWQSYSGETTLSYFSQMAGLTVQNFLSAASGIAVIFAFIRAFTRQSMSTLGNAWVDLLRITLWVLVPVALLIALFLIQQGALQNFLPYQAVNTVEGAQQLLPMGPVASQEAIKMLGTNGGGFFNANSSHPFENPTALTNFVQMLAIFLIPTALCFAFGEVTGDRRQGRMLLWAMSVIFVICVGVVMWAEVQGNPHLLALGADSSINMEGKESRFGVLVSSLFAVVTTAASCGAVIAMHDSFTALGGMVPMWLMQIGEVVFGGVGSGLYGMMLFVLLAVFIAGLMIGRTPEYLGKKIDVREMKLTALAILVTPTLVLMGAALAMMTDAGRSAMLNPGPHGFSEVLYAVSSAANNNGSAFAGLSANSPFWNCLLAFCMFVGRFGVIIPVMAIAGSLVSKKSQPASSGTLPTHGPLFVGLLIGTVLLVGALTFIPALALGPVAEYLS.

12 consecutive transmembrane segments (helical) span residues 5 to 25, 63 to 83, 132 to 152, 170 to 190, 253 to 273, 283 to 303, 329 to 349, 356 to 376, 379 to 399, 416 to 436, 484 to 504, and 526 to 546; these read GFLL…PLGS, LCAI…MLLG, GLTV…FAFI, LLRI…LFLI, FVQM…FGEV, LLWA…WAEV, VLVS…AVIA, ALGG…FGGV, GLYG…LMIG, LTAL…ALAM, LLAF…MAIA, and LFVG…FIPA.

The protein belongs to the KdpA family. In terms of assembly, the system is composed of three essential subunits: KdpA, KdpB and KdpC.

It localises to the cell inner membrane. Functionally, part of the high-affinity ATP-driven potassium transport (or Kdp) system, which catalyzes the hydrolysis of ATP coupled with the electrogenic transport of potassium into the cytoplasm. This subunit binds the periplasmic potassium ions and delivers the ions to the membrane domain of KdpB through an intramembrane tunnel. This Shigella boydii serotype 18 (strain CDC 3083-94 / BS512) protein is Potassium-transporting ATPase potassium-binding subunit.